The following is a 338-amino-acid chain: Large ribosomal subunit protein uL10 (338 aa).

The segment covering 309 to 327 (KAEVEEAKEEEKEEKKEEA) has biased composition (basic and acidic residues). The interval 309–338 (KAEVEEAKEEEKEEKKEEAAPAAAGLGLLF) is disordered.

This sequence belongs to the universal ribosomal protein uL10 family. In terms of assembly, part of the 50S ribosomal subunit. Forms part of the ribosomal stalk which helps the ribosome interact with GTP-bound translation factors. Forms a heptameric L10(L12)2(L12)2(L12)2 complex, where L10 forms an elongated spine to which the L12 dimers bind in a sequential fashion.

Its function is as follows. Forms part of the ribosomal stalk, playing a central role in the interaction of the ribosome with GTP-bound translation factors. The polypeptide is Large ribosomal subunit protein uL10 (Methanothermococcus thermolithotrophicus (Methanococcus thermolithotrophicus)).